Here is a 397-residue protein sequence, read N- to C-terminus: Elongation factor Tu (397 aa).

One can recognise a tr-type G domain in the interval 10 to 206 (KPHVNIGTIG…AVDEYIPTPE (197 aa)). A G1 region spans residues 19-26 (GHIDHGKT). Residue 19–26 (GHIDHGKT) coordinates GTP. T26 is a binding site for Mg(2+). The segment at 62–66 (GITIS) is G2. A G3 region spans residues 83-86 (DCPG). GTP-binding positions include 83–87 (DCPGH) and 138–141 (NKCD). Positions 138–141 (NKCD) are G4. Residues 176–178 (AAF) are G5.

Belongs to the TRAFAC class translation factor GTPase superfamily. Classic translation factor GTPase family. EF-Tu/EF-1A subfamily. Monomer.

The protein resides in the cytoplasm. It catalyses the reaction GTP + H2O = GDP + phosphate + H(+). Its function is as follows. GTP hydrolase that promotes the GTP-dependent binding of aminoacyl-tRNA to the A-site of ribosomes during protein biosynthesis. This Nocardioides sp. (strain ATCC BAA-499 / JS614) protein is Elongation factor Tu.